The following is a 108-amino-acid chain: MGRLGPSNGLLPLLLAVGGFSLVQAQRECSCSAVSPGILAGIVLGDLVLTLLIALAVYSLGRLVPRTRGAVDVTRKQHIAETESAYQELQGQRSDVYSDLNTQRQYYK.

The signal sequence occupies residues 1–25 (MGRLGPSNGLLPLLLAVGGFSLVQA). At 26 to 36 (QRECSCSAVSP) the chain is on the extracellular side. Residues 37-57 (GILAGIVLGDLVLTLLIALAV) form a helical membrane-spanning segment. Residue aspartate 46 coordinates Ca(2+). Residues 58 to 108 (YSLGRLVPRTRGAVDVTRKQHIAETESAYQELQGQRSDVYSDLNTQRQYYK) lie on the Cytoplasmic side of the membrane. Residues 75 to 103 (RKQHIAETESAYQELQGQRSDVYSDLNTQ) form the ITAM domain. Tyrosine 86 and tyrosine 97 each carry phosphotyrosine.

It belongs to the TYROBP family. Homodimer; disulfide-linked. Homotrimer; disulfide-linked. Homotetramer; disulfide-linked. Homotrimers and homotetramers form when low levels of partner receptors are available and is competitive with assembly with interacting receptors. They may represent alternative oligomerization states or may be intermediates in the receptor assembly process. Binding of a metal cation aids in homooligomerization through coordination of the metal ion by the subunits of the oligomer. Interacts with TREM1. Interacts with TREM2. Interacts with CLECSF5. Interacts with CD300LB and CD300C2. Interacts with CD300E. Interacts (via ITAM domain) with SYK (via SH2 domains); activates SYK mediating neutrophils and macrophages integrin-mediated activation. Interacts with KLRC2. Interacts with CD300H. Interacts with KLRD1. Interacts with SIGLEC1. Post-translationally, following ligand binding by associated receptors, tyrosine phosphorylated in the ITAM domain which leads to activation of additional tyrosine kinases and subsequent cell activation. In terms of tissue distribution, highly expressed in spleen, liver and thymus. Weakly expressed in lymph nodes. Expressed in peripheral blood leukocytes, granulocytes, macrophages, and monocytes. LPS does not increase expression in granulocytes.

It is found in the cell membrane. Functionally, adapter protein which non-covalently associates with activating receptors found on the surface of a variety of immune cells to mediate signaling and cell activation following ligand binding by the receptors. TYROBP is tyrosine-phosphorylated in the ITAM domain following ligand binding by the associated receptors which leads to activation of additional tyrosine kinases and subsequent cell activation. Also has an inhibitory role in some cells. Non-covalently associates with activating receptors of the CD300 family to mediate cell activation. Also mediates cell activation through association with activating receptors of the CD200R family. Required for neutrophil activation mediated by integrin. Required for the activation of myeloid cells mediated by the CLEC5A/MDL1 receptor. Associates with natural killer (NK) cell receptors such as the KLRD1/KLRC2 heterodimer to mediate NK cell activation. Associates with TREM1 to mediate activation of neutrophils and monocytes. Associates with TREM2 on monocyte-derived dendritic cells to mediate up-regulation of chemokine receptor CCR7 and dendritic cell maturation and survival. Association with TREM2 mediates cytokine-induced formation of multinucleated giant cells which are formed by the fusion of macrophages. Stabilizes the TREM2 C-terminal fragment (TREM2-CTF) produced by TREM2 ectodomain shedding which suppresses the release of pro-inflammatory cytokines. In microglia, required with TREM2 for phagocytosis of apoptotic neurons. Required with ITGAM/CD11B in microglia to control production of microglial superoxide ions which promote the neuronal apoptosis that occurs during brain development. Promotes pro-inflammatory responses in microglia following nerve injury which accelerates degeneration of injured neurons. Positively regulates the expression of the IRAK3/IRAK-M kinase and IL10 production by liver dendritic cells and inhibits their T cell allosimulatory ability. Negatively regulates B cell proliferation. Required for CSF1-mediated osteoclast cytoskeletal organization. Positively regulates multinucleation during osteoclast development. This Sus scrofa (Pig) protein is TYRO protein tyrosine kinase-binding protein.